The sequence spans 573 residues: Splicing factor U2af large subunit A (573 aa).

The disordered stretch occupies residues M1–D175. Basic and acidic residues predominate over residues N22–H93. Residues R94–D105 show a composition bias toward basic residues. Over residues H106 to G141 the composition is skewed to basic and acidic residues. The segment covering T159–Q169 has biased composition (basic residues). 3 consecutive RRM domains span residues R239–D322, D359–Q437, and Q478–D564.

Belongs to the splicing factor SR family. In terms of assembly, component of the spliceosome. Interacts with SUA. Interacts with SF1 in the nucleus.

It localises to the nucleus. In terms of biological role, necessary for the splicing of pre-mRNA. The sequence is that of Splicing factor U2af large subunit A from Arabidopsis thaliana (Mouse-ear cress).